Reading from the N-terminus, the 152-residue chain is 6,7-dimethyl-8-ribityllumazine synthase (152 aa).

5-amino-6-(D-ribitylamino)uracil is bound by residues Phe21, 55–57, and 79–81; these read AFE and AVI. (2S)-2-hydroxy-3-oxobutyl phosphate is bound at residue 84–85; the sequence is AT. His87 functions as the Proton donor in the catalytic mechanism. Phe112 contacts 5-amino-6-(D-ribitylamino)uracil. A (2S)-2-hydroxy-3-oxobutyl phosphate-binding site is contributed by Arg126.

It belongs to the DMRL synthase family. In terms of assembly, forms an icosahedral capsid composed of 60 subunits, arranged as a dodecamer of pentamers.

It carries out the reaction (2S)-2-hydroxy-3-oxobutyl phosphate + 5-amino-6-(D-ribitylamino)uracil = 6,7-dimethyl-8-(1-D-ribityl)lumazine + phosphate + 2 H2O + H(+). It participates in cofactor biosynthesis; riboflavin biosynthesis; riboflavin from 2-hydroxy-3-oxobutyl phosphate and 5-amino-6-(D-ribitylamino)uracil: step 1/2. Functionally, catalyzes the formation of 6,7-dimethyl-8-ribityllumazine by condensation of 5-amino-6-(D-ribitylamino)uracil with 3,4-dihydroxy-2-butanone 4-phosphate. This is the penultimate step in the biosynthesis of riboflavin. In Exiguobacterium sibiricum (strain DSM 17290 / CCUG 55495 / CIP 109462 / JCM 13490 / 255-15), this protein is 6,7-dimethyl-8-ribityllumazine synthase.